A 325-amino-acid polypeptide reads, in one-letter code: tRNA dimethylallyltransferase (325 aa).

Residue 17 to 24 participates in ATP binding; sequence GPTASGKT. Residue 19-24 participates in substrate binding; sequence TASGKT. 4 interaction with substrate tRNA regions span residues 42-45, 166-170, 251-256, and 284-291; these read DSAL, QRIQR, RCVGYR, and KRQITWLR.

The protein belongs to the IPP transferase family. As to quaternary structure, monomer. Requires Mg(2+) as cofactor.

It catalyses the reaction adenosine(37) in tRNA + dimethylallyl diphosphate = N(6)-dimethylallyladenosine(37) in tRNA + diphosphate. Its function is as follows. Catalyzes the transfer of a dimethylallyl group onto the adenine at position 37 in tRNAs that read codons beginning with uridine, leading to the formation of N6-(dimethylallyl)adenosine (i(6)A). This chain is tRNA dimethylallyltransferase, found in Burkholderia multivorans (strain ATCC 17616 / 249).